The sequence spans 392 residues: uncharacterized protein (392 aa).

The protein belongs to the peptidase M24 family.

This is an uncharacterized protein from Sinorhizobium fredii (strain NBRC 101917 / NGR234).